Here is a 1744-residue protein sequence, read N- to C-terminus: Probable disease resistance protein At4g19520 (1744 aa).

A TIR 1 domain is found at 3–163 (DGKEVYISFN…KIVADVRQKL (161 aa)). Glu-80 is a catalytic residue. The region spanning 192 to 411 (SLGIWGMAGI…VSEKEIFLDI (220 aa)) is the NB-ARC domain. 20 LRR repeats span residues 503 to 526 (YEDV…AFQH), 557 to 581 (PPEL…GFQY), 583 to 602 (VELN…TKNL), 603 to 626 (EVLK…QYSP), 648 to 669 (LQHL…PKVP), 670 to 692 (PSIR…NHSS), 710 to 733 (DHRK…IVIF), 734 to 754 (ESLE…QGFP), 755 to 777 (QNLK…LCHH), 779 to 802 (SKLV…MSNM), 804 to 823 (YLAV…KELP), 824 to 846 (RNLK…LLET), 848 to 871 (SEVV…MSKL), 892 to 915 (PLNL…IGDL), 917 to 939 (LLDT…MHNL), 941 to 963 (PLKV…LPKV), 987 to 1010 (YEHR…IRWM), 1011 to 1035 (PSLK…DFSK), 1037 to 1059 (LSLR…SLQL), and 1062 to 1086 (AHGC…TFSN). One can recognise a TIR 2 domain in the interval 1399–1559 (RNNDVFVSFH…KVANDIRKKL (161 aa)).

The protein belongs to the disease resistance TIR-NB-LRR family.

It catalyses the reaction NAD(+) + H2O = ADP-D-ribose + nicotinamide + H(+). Probable disease resistance protein. The chain is Probable disease resistance protein At4g19520 from Arabidopsis thaliana (Mouse-ear cress).